Consider the following 345-residue polypeptide: NADPH dehydrogenase (345 aa).

23–26 (SPMC) lines the FMN pocket. Substrate is bound at residue Tyr28. 2 residues coordinate FMN: Ala60 and Gln102. 164–167 (HGAH) is a substrate binding site. FMN-binding positions include Arg215 and 307–308 (GR).

This sequence belongs to the NADH:flavin oxidoreductase/NADH oxidase family. NamA subfamily. In terms of assembly, homotetramer. It depends on FMN as a cofactor.

It catalyses the reaction A + NADPH + H(+) = AH2 + NADP(+). Functionally, catalyzes the reduction of the double bond of an array of alpha,beta-unsaturated aldehydes and ketones. It also reduces the nitro group of nitroester and nitroaromatic compounds. It could have a role in detoxification processes. The polypeptide is NADPH dehydrogenase (Bacillus thuringiensis (strain Al Hakam)).